The chain runs to 546 residues: Calcitonin receptor-like protein 1 (546 aa).

The Cytoplasmic segment spans residues 1 to 171 (MADATSPFNV…EVARNARKLE (171 aa)). A helical transmembrane segment spans residues 172–192 (FVGLGLSLVSLILAISIFSYF). The Extracellular segment spans residues 193 to 205 (RRLRVFRNLLHLH). A helical transmembrane segment spans residues 206-226 (LMIAMLMVVILRLVLYIDLIF). Residues 227-251 (TGENGPHTNSAEGKTINTMPIVCEG) are Cytoplasmic-facing. The chain crosses the membrane as a helical span at residues 252 to 272 (MFFFLEYFKTVTFCWMFLEGI). Over 273–292 (YLNNQIVFGFFNSEPKLLPY) the chain is Extracellular. The chain crosses the membrane as a helical span at residues 293–313 (FIAGYGIPLVHTMLWLLVVLI). Topologically, residues 314 to 333 (KKDFKVERCLGSYYLEPEFW) are cytoplasmic. Residues 334–354 (ILDGPRMAELVINLFFICNVI) traverse the membrane as a helical segment. The Extracellular portion of the chain corresponds to 355-377 (RVLYSKVRESNNTSEAGLKKSVK). N-linked (GlcNAc...) asparagine glycans are attached at residues N365 and N366. A helical transmembrane segment spans residues 378–398 (AAMMLLPLLGVPNIMQTIPFA). The Cytoplasmic portion of the chain corresponds to 399 to 403 (PTRDN). A helical membrane pass occupies residues 404–424 (IMVFAVWTYTASFTYMYQGLM). The Extracellular segment spans residues 425 to 546 (VASIYCFTNK…EGSNRSTKSP (122 aa)). Residues N472 and N476 are each glycosylated (N-linked (GlcNAc...) asparagine). The disordered stretch occupies residues 472–546 (NGTANASAPQ…EGSNRSTKSP (75 aa)). Residues 473 to 485 (GTANASAPQTNNA) show a composition bias toward polar residues. The span at 500 to 520 (KGSDDSTTKLMKDAVMEEEKN) shows a compositional bias: basic and acidic residues. N540 is a glycosylation site (N-linked (GlcNAc...) asparagine).

The protein belongs to the G-protein coupled receptor 2 family. Expression was observed in the mechanosensory neuron pairs PLM, ALM, FLP, OLQD, and OLQV, the chemosensory neurons PHA, PHB, RMEV, the ring motor neurons RMED, and the pharyngeal interneuron pair I1. Expression in sensory neurons PHA, PQR and URY are responsible for mate searching behavior. Expressed in AIY, RIM, RIA, and other neurons.

The protein localises to the cell membrane. Its function is as follows. G-protein coupled receptor for PDF neuropeptides. Plays a role in responses to environmental signals, including chemicals and touch, and in modulating locomotory behaviors. Capable of transducing signals via an adenylate cyclase acy-1 cAMP-dependent pathway. Required to regulate the sex-specific expression of TGFbeta-like daf-7 in the ASJ chemosensory neurons, perhaps acting via acy-1. Involved in modulating mate searching behavior independent of nutritional status. In the presence of food, plays a role in initiating and extending exploratory roaming behavior, perhaps acting in AIY, RIM, RIA, and other neurons, in opposition to 5-hydroxytryptamine (serotonin) signaling. Involved in mediating arousal from the sleep-like state called lethargus, which occurs during molting between larval and adult stages, in part by regulating touch sensitivity. May play a role in circadian rhythms of locomotor activity. G-protein coupled receptor which is activated by neuropeptides PDF-1 and PDF-2. Probably acts through the G-alpha(s) type of G proteins to elevate cAMP levels. Functionally, G-protein coupled receptor which is activated by neuropeptides PDF-1 and PDF-2; however, activation is lower compared to isoforms a and b. Probably inhibits cAMP levels through the G-alpha(i/o) type of G proteins. The protein is Calcitonin receptor-like protein 1 (pdfr-1) of Caenorhabditis elegans.